A 435-amino-acid polypeptide reads, in one-letter code: Serine hydroxymethyltransferase (435 aa).

Residues L131 and 135 to 137 (GHL) contribute to the (6S)-5,6,7,8-tetrahydrofolate site. An N6-(pyridoxal phosphate)lysine modification is found at K240.

Belongs to the SHMT family. As to quaternary structure, homodimer. Pyridoxal 5'-phosphate serves as cofactor.

It is found in the cytoplasm. It carries out the reaction (6R)-5,10-methylene-5,6,7,8-tetrahydrofolate + glycine + H2O = (6S)-5,6,7,8-tetrahydrofolate + L-serine. It functions in the pathway one-carbon metabolism; tetrahydrofolate interconversion. The protein operates within amino-acid biosynthesis; glycine biosynthesis; glycine from L-serine: step 1/1. Functionally, catalyzes the reversible interconversion of serine and glycine with tetrahydrofolate (THF) serving as the one-carbon carrier. This reaction serves as the major source of one-carbon groups required for the biosynthesis of purines, thymidylate, methionine, and other important biomolecules. Also exhibits THF-independent aldolase activity toward beta-hydroxyamino acids, producing glycine and aldehydes, via a retro-aldol mechanism. The sequence is that of Serine hydroxymethyltransferase from Bifidobacterium longum subsp. infantis (strain ATCC 15697 / DSM 20088 / JCM 1222 / NCTC 11817 / S12).